The sequence spans 185 residues: Ribosome-recycling factor (185 aa).

The protein belongs to the RRF family.

The protein resides in the cytoplasm. Responsible for the release of ribosomes from messenger RNA at the termination of protein biosynthesis. May increase the efficiency of translation by recycling ribosomes from one round of translation to another. The sequence is that of Ribosome-recycling factor from Geobacillus thermodenitrificans (strain NG80-2).